We begin with the raw amino-acid sequence, 98 residues long: Co-chaperonin GroES 5 (98 aa).

This sequence belongs to the GroES chaperonin family. In terms of assembly, heptamer of 7 subunits arranged in a ring. Interacts with the chaperonin GroEL.

It localises to the cytoplasm. Functionally, together with the chaperonin GroEL, plays an essential role in assisting protein folding. The GroEL-GroES system forms a nano-cage that allows encapsulation of the non-native substrate proteins and provides a physical environment optimized to promote and accelerate protein folding. GroES binds to the apical surface of the GroEL ring, thereby capping the opening of the GroEL channel. The chain is Co-chaperonin GroES 5 from Mesorhizobium japonicum (strain LMG 29417 / CECT 9101 / MAFF 303099) (Mesorhizobium loti (strain MAFF 303099)).